The sequence spans 524 residues: Cytochrome P450 monooxygenase ATR4 (524 aa).

A helical transmembrane segment spans residues Ile-13–Ile-36. 3 N-linked (GlcNAc...) asparagine glycosylation sites follow: Asn-291, Asn-444, and Asn-454.

It belongs to the cytochrome P450 family. Heme is required as a cofactor.

The protein resides in the membrane. The protein operates within mycotoxin biosynthesis. Functionally, cytochrome P450 monooxygenase; part of the core atranone cluster (CAC) which products are predicted to catalyze most or all steps of mycotoxin atranone synthesis, starting from geranylgeranyl pyrophosphate (GGPP). The initial cyclization of GGPP to dolabellane is probably performed by the terpene cyclase ATR13. The Baeyer-Villiger oxidation near the end of the atranone synthesis, which converts atranones D and E to atranones F and G is predicted to be catalyzed by the monooxygenase ATR8. Of the CAC's other predicted gene products, the reducing PKS ATR6 might synthesize a polyketide chain. This polyketide is probably transferred onto the atranone backbone by the polyketide transferase ATR5. Other predicted CAC products include 4 oxygenases (ATR2, ATR3, ATR4, and ATR14), 3 short-chain reductases (ATR7, ATR9, and ATR10), and a methyltransferase (ATR12). These may all be involved in the various steps of atranone biosynthesis, although their specific roles must await experimental determination. This chain is Cytochrome P450 monooxygenase ATR4, found in Stachybotrys chlorohalonatus (strain IBT 40285).